A 386-amino-acid chain; its full sequence is Succinate--CoA ligase [ADP-forming] subunit beta (386 aa).

Positions 9–244 constitute an ATP-grasp domain; the sequence is KEILKQYGVK…LDEEDEKEIE (236 aa). Residues Lys46, 53–55, Glu99, Cys102, and Glu107 each bind ATP; that span reads GRG. Mg(2+) contacts are provided by Asn199 and Asp213. Residues Asn264 and 321–323 contribute to the substrate site; that span reads GIM.

This sequence belongs to the succinate/malate CoA ligase beta subunit family. In terms of assembly, heterotetramer of two alpha and two beta subunits. It depends on Mg(2+) as a cofactor.

The enzyme catalyses succinate + ATP + CoA = succinyl-CoA + ADP + phosphate. It catalyses the reaction GTP + succinate + CoA = succinyl-CoA + GDP + phosphate. It functions in the pathway carbohydrate metabolism; tricarboxylic acid cycle; succinate from succinyl-CoA (ligase route): step 1/1. Functionally, succinyl-CoA synthetase functions in the citric acid cycle (TCA), coupling the hydrolysis of succinyl-CoA to the synthesis of either ATP or GTP and thus represents the only step of substrate-level phosphorylation in the TCA. The beta subunit provides nucleotide specificity of the enzyme and binds the substrate succinate, while the binding sites for coenzyme A and phosphate are found in the alpha subunit. The chain is Succinate--CoA ligase [ADP-forming] subunit beta from Brevibacillus brevis (strain 47 / JCM 6285 / NBRC 100599).